The chain runs to 440 residues: Thymidine phosphorylase (440 aa).

This sequence belongs to the thymidine/pyrimidine-nucleoside phosphorylase family. In terms of assembly, homodimer.

It catalyses the reaction thymidine + phosphate = 2-deoxy-alpha-D-ribose 1-phosphate + thymine. It participates in pyrimidine metabolism; dTMP biosynthesis via salvage pathway; dTMP from thymine: step 1/2. Functionally, the enzymes which catalyze the reversible phosphorolysis of pyrimidine nucleosides are involved in the degradation of these compounds and in their utilization as carbon and energy sources, or in the rescue of pyrimidine bases for nucleotide synthesis. The chain is Thymidine phosphorylase from Yersinia pseudotuberculosis serotype O:1b (strain IP 31758).